Reading from the N-terminus, the 204-residue chain is Phosphoribosyl-dephospho-CoA transferase (204 aa).

Residues Asp129 and Asp131 contribute to the active site.

The protein belongs to the MdcG family.

It catalyses the reaction apo-[malonate decarboxylase ACP] + 2'-(5''-triphospho-alpha-D-ribosyl)-3'-dephospho-CoA = holo-[malonate decarboxylase ACP] + diphosphate. Functionally, transfers 2'-(5-triphosphoribosyl)-3'-dephosphocoenzyme-A to the apo-[acyl-carrier-protein] of the malonate decarboxylase to yield holo-[acyl-carrier-protein]. The protein is Phosphoribosyl-dephospho-CoA transferase of Pseudomonas putida (strain GB-1).